The following is a 3083-amino-acid chain: Laminin subunit alpha-1 (3083 aa).

The first 24 residues, 1-24, serve as a signal peptide directing secretion; it reads MRGSGTGAALLVLLASVLWVTVRS. Pyrrolidone carboxylic acid is present on Gln25. Positions 25–276 constitute a Laminin N-terminal domain; that stretch reads QQRGLFPAIL…SIKDISVGGM (252 aa). 6 cysteine pairs are disulfide-bonded: Cys277–Cys286, Cys279–Cys297, Cys299–Cys308, Cys311–Cys331, Cys334–Cys343, and Cys336–Cys368. 4 Laminin EGF-like domains span residues 277–333, 334–403, 404–460, and 461–509; these read CICY…ECEE, CNCH…PCRP, CNCD…NCIP, and CDCR…GCSE. An N-linked (GlcNAc...) asparagine glycan is attached at Asn370. Cystine bridges form between Cys371/Cys380, Cys383/Cys401, Cys404/Cys416, Cys406/Cys434, Cys436/Cys445, Cys448/Cys458, Cys461/Cys474, Cys463/Cys478, Cys480/Cys489, and Cys492/Cys507. A Laminin EGF-like 5; first part domain is found at 510–519; it reads CFCFGVSGVC. A Laminin IV type A 1 domain is found at 523–715; that stretch reads TWSISQVTNM…DLAVAADVEH (193 aa). An N-linked (GlcNAc...) asparagine glycan is attached at Asn672. A Laminin EGF-like 5; second part domain is found at 716 to 748; sequence CECPQGYTGTSCEACLPGYYRVDGILFGGICQP. Intrachain disulfides connect Cys749/Cys758, Cys751/Cys764, Cys767/Cys776, Cys779/Cys795, Cys798/Cys813, Cys800/Cys823, Cys826/Cys835, Cys838/Cys853, Cys856/Cys870, Cys858/Cys877, Cys880/Cys889, Cys892/Cys906, Cys909/Cys921, Cys911/Cys928, Cys930/Cys939, Cys942/Cys955, Cys958/Cys970, Cys960/Cys976, Cys978/Cys987, Cys990/Cys1002, Cys1005/Cys1014, Cys1007/Cys1021, Cys1023/Cys1032, Cys1035/Cys1048, Cys1051/Cys1063, Cys1053/Cys1070, Cys1072/Cys1081, Cys1084/Cys1094, Cys1097/Cys1109, Cys1099/Cys1125, Cys1127/Cys1136, and Cys1139/Cys1154. 8 consecutive Laminin EGF-like domains span residues 749–797, 798–855, 856–908, 909–957, 958–1004, 1005–1050, 1051–1096, and 1097–1156; these read CECH…DCQP, CACP…TCVP, CNCS…NCRA, CDCH…GCVP, CNCS…GCTP, CDCA…GCQA, CNCS…DCVP, and CGCD…GCSP. Positions 1147-1149 match the Cell attachment site motif; the sequence is RGD. The region spanning 1157-1166 is the Laminin EGF-like 14; first part domain; it reads CFCFGLSQLC. The 192-residue stretch at 1177 to 1368 folds into the Laminin IV type A 2 domain; the sequence is ITLASDQPLL…EGEAALLLEL (192 aa). N-linked (GlcNAc...) asparagine glycosylation occurs at Asn1344. The Laminin EGF-like 14; second part domain occupies 1369–1409; it reads CVCPPGTAGHSCQDCAPGYYREKLPESGGRGPRPLLAPCVP. 12 disulfides stabilise this stretch: Cys1410/Cys1419, Cys1412/Cys1426, Cys1429/Cys1438, Cys1441/Cys1456, Cys1459/Cys1473, Cys1461/Cys1483, Cys1486/Cys1495, Cys1498/Cys1513, Cys1516/Cys1528, Cys1518/Cys1535, Cys1537/Cys1546, and Cys1549/Cys1560. 3 Laminin EGF-like domains span residues 1410–1458, 1459–1515, and 1516–1562; these read CNCN…DCTP, CTCP…SCQT, and CDCN…DCVS. The tract at residues 1564–2123 is domain II and I; that stretch reads DDDCVGPLLN…SRARKQVASI (560 aa). Residues 1617–1691 adopt a coiled-coil conformation; sequence AKKIRAEIQL…VATLNQTARK (75 aa). 6 N-linked (GlcNAc...) asparagine glycosylation sites follow: Asn1659, Asn1686, Asn1718, Asn1725, Asn1763, and Asn1811. The stretch at 1723-1809 forms a coiled coil; it reads QQNATLELKA…QEKKLRVQEE (87 aa). The stretch at 1868–1901 forms a coiled coil; sequence KRRARDLVHRAEQHASELQSRAGALDRDLENVRN. Asn1935, Asn2026, Asn2045, and Asn2066 each carry an N-linked (GlcNAc...) asparagine glycan. Laminin G-like domains lie at 2124–2304, 2312–2488, 2493–2679, 2721–2893, and 2898–3078; these read KVAV…CNGC, DSSF…RKGC, IQSV…LDTC, AHQF…VDRC, and QEGT…PHSC. Cysteines 2278 and 2304 form a disulfide. N-linked (GlcNAc...) asparagine glycosylation occurs at Asn2355. Disulfide bonds link Cys2464-Cys2488 and Cys2652-Cys2679. Asn2834 carries an N-linked (GlcNAc...) asparagine glycan. Residues Cys2868 and Cys2893 are joined by a disulfide bond. Asn2923 is a glycosylation site (N-linked (GlcNAc...) asparagine). Cysteines 3047 and 3078 form a disulfide.

Laminin is a complex glycoprotein, consisting of three different polypeptide chains (alpha, beta, gamma), which are bound to each other by disulfide bonds into a cross-shaped molecule comprising one long and three short arms with globules at each end. Alpha-1 is a subunit of laminin-1 (laminin-111 or EHS laminin) and laminin-3 (laminin-121 or S-laminin). Post-translationally, tyrosine phosphorylated by PKDCC/VLK.

The protein localises to the secreted. It localises to the extracellular space. The protein resides in the extracellular matrix. It is found in the basement membrane. Functionally, binding to cells via a high affinity receptor, laminin is thought to mediate the attachment, migration and organization of cells into tissues during embryonic development by interacting with other extracellular matrix components. This Mus musculus (Mouse) protein is Laminin subunit alpha-1 (Lama1).